A 103-amino-acid polypeptide reads, in one-letter code: Large ribosomal subunit protein uL24 (103 aa).

It belongs to the universal ribosomal protein uL24 family. Part of the 50S ribosomal subunit.

One of two assembly initiator proteins, it binds directly to the 5'-end of the 23S rRNA, where it nucleates assembly of the 50S subunit. In terms of biological role, one of the proteins that surrounds the polypeptide exit tunnel on the outside of the subunit. This is Large ribosomal subunit protein uL24 from Vesicomyosocius okutanii subsp. Calyptogena okutanii (strain HA).